A 907-amino-acid chain; its full sequence is Protein translocase subunit SecA (907 aa).

ATP contacts are provided by residues Gln-87, 105–109 (GEGKT), and Asp-512. 4 residues coordinate Zn(2+): Cys-891, Cys-893, Cys-902, and His-903.

It belongs to the SecA family. In terms of assembly, monomer and homodimer. Part of the essential Sec protein translocation apparatus which comprises SecA, SecYEG and auxiliary proteins SecDF-YajC and YidC. It depends on Zn(2+) as a cofactor.

The protein localises to the cell inner membrane. It localises to the cytoplasm. It carries out the reaction ATP + H2O + cellular proteinSide 1 = ADP + phosphate + cellular proteinSide 2.. Part of the Sec protein translocase complex. Interacts with the SecYEG preprotein conducting channel. Has a central role in coupling the hydrolysis of ATP to the transfer of proteins into and across the cell membrane, serving both as a receptor for the preprotein-SecB complex and as an ATP-driven molecular motor driving the stepwise translocation of polypeptide chains across the membrane. The sequence is that of Protein translocase subunit SecA from Tolumonas auensis (strain DSM 9187 / NBRC 110442 / TA 4).